The primary structure comprises 447 residues: Ribosomal protein uS12 methylthiotransferase RimO (447 aa).

Positions 10-120 (PKVGFVSLGC…VVNAVHDVVP (111 aa)) constitute an MTTase N-terminal domain. The [4Fe-4S] cluster site is built by cysteine 19, cysteine 55, cysteine 84, cysteine 153, cysteine 157, and cysteine 160. The Radical SAM core domain occupies 139–377 (LTPRHYAYLK…MAHQQAISAA (239 aa)). Positions 380-447 (QMKIGKEIEV…DEYDLWAEML (68 aa)) constitute a TRAM domain.

It belongs to the methylthiotransferase family. RimO subfamily. The cofactor is [4Fe-4S] cluster.

The protein resides in the cytoplasm. The enzyme catalyses L-aspartate(89)-[ribosomal protein uS12]-hydrogen + (sulfur carrier)-SH + AH2 + 2 S-adenosyl-L-methionine = 3-methylsulfanyl-L-aspartate(89)-[ribosomal protein uS12]-hydrogen + (sulfur carrier)-H + 5'-deoxyadenosine + L-methionine + A + S-adenosyl-L-homocysteine + 2 H(+). Functionally, catalyzes the methylthiolation of an aspartic acid residue of ribosomal protein uS12. This chain is Ribosomal protein uS12 methylthiotransferase RimO, found in Pseudomonas syringae pv. syringae (strain B728a).